The sequence spans 1010 residues: Protein translocase subunit SecA (1010 aa).

ATP is bound by residues Gln86, 104–108 (GEGKT), and Asp535. Positions 893–904 (QAGAADGNAKGA) are enriched in low complexity. Positions 893–916 (QAGAADGNAKGARTVRHSVRLPGR) are disordered. 4 residues coordinate Zn(2+): Cys920, Cys922, Cys931, and His932. The segment covering 950–981 (QHAAVAADTPAQPAPQATATRPPTSQVPRGRA) has biased composition (low complexity). Residues 950–1010 (QHAAVAADTP…RGKGASARKK (61 aa)) form a disordered region.

The protein belongs to the SecA family. In terms of assembly, monomer and homodimer. Part of the essential Sec protein translocation apparatus which comprises SecA, SecYEG and auxiliary proteins SecDF. Other proteins may also be involved. The cofactor is Zn(2+).

It localises to the cell membrane. Its subcellular location is the cytoplasm. It carries out the reaction ATP + H2O + cellular proteinSide 1 = ADP + phosphate + cellular proteinSide 2.. Its function is as follows. Part of the Sec protein translocase complex. Interacts with the SecYEG preprotein conducting channel. Has a central role in coupling the hydrolysis of ATP to the transfer of proteins into and across the cell membrane, serving as an ATP-driven molecular motor driving the stepwise translocation of polypeptide chains across the membrane. This Roseiflexus sp. (strain RS-1) protein is Protein translocase subunit SecA.